Here is a 363-residue protein sequence, read N- to C-terminus: Chorismate synthase (363 aa).

Residue R48 participates in NADP(+) binding. FMN contacts are provided by residues 125 to 127, 238 to 239, G278, 293 to 297, and R319; these read RSS, NA, and KPTAS.

This sequence belongs to the chorismate synthase family. In terms of assembly, homotetramer. FMNH2 is required as a cofactor.

The enzyme catalyses 5-O-(1-carboxyvinyl)-3-phosphoshikimate = chorismate + phosphate. It participates in metabolic intermediate biosynthesis; chorismate biosynthesis; chorismate from D-erythrose 4-phosphate and phosphoenolpyruvate: step 7/7. Its function is as follows. Catalyzes the anti-1,4-elimination of the C-3 phosphate and the C-6 proR hydrogen from 5-enolpyruvylshikimate-3-phosphate (EPSP) to yield chorismate, which is the branch point compound that serves as the starting substrate for the three terminal pathways of aromatic amino acid biosynthesis. This reaction introduces a second double bond into the aromatic ring system. The polypeptide is Chorismate synthase (Acinetobacter baylyi (strain ATCC 33305 / BD413 / ADP1)).